Consider the following 133-residue polypeptide: NAD(P)H-quinone oxidoreductase subunit 3 (133 aa).

Helical transmembrane passes span Tyr22–Leu44, Met77–Val97, and Leu102–Ala122.

Belongs to the complex I subunit 3 family. As to quaternary structure, NDH-1 can be composed of about 15 different subunits; different subcomplexes with different compositions have been identified which probably have different functions.

It is found in the cellular thylakoid membrane. It catalyses the reaction a plastoquinone + NADH + (n+1) H(+)(in) = a plastoquinol + NAD(+) + n H(+)(out). The enzyme catalyses a plastoquinone + NADPH + (n+1) H(+)(in) = a plastoquinol + NADP(+) + n H(+)(out). NDH-1 shuttles electrons from an unknown electron donor, via FMN and iron-sulfur (Fe-S) centers, to quinones in the respiratory and/or the photosynthetic chain. The immediate electron acceptor for the enzyme in this species is believed to be plastoquinone. Couples the redox reaction to proton translocation, and thus conserves the redox energy in a proton gradient. Cyanobacterial NDH-1 also plays a role in inorganic carbon-concentration. The chain is NAD(P)H-quinone oxidoreductase subunit 3 from Synechococcus sp. (strain ATCC 27144 / PCC 6301 / SAUG 1402/1) (Anacystis nidulans).